We begin with the raw amino-acid sequence, 219 residues long: Thiamine-phosphate synthase (219 aa).

Residues 44-48 (QFREK) and Asn79 contribute to the 4-amino-2-methyl-5-(diphosphooxymethyl)pyrimidine site. Positions 80 and 99 each coordinate Mg(2+). A 4-amino-2-methyl-5-(diphosphooxymethyl)pyrimidine-binding site is contributed by Ser117. A 2-[(2R,5Z)-2-carboxy-4-methylthiazol-5(2H)-ylidene]ethyl phosphate-binding site is contributed by 143-145 (TST). 4-amino-2-methyl-5-(diphosphooxymethyl)pyrimidine is bound at residue Lys146. Residues Gly175 and 195 to 196 (IS) contribute to the 2-[(2R,5Z)-2-carboxy-4-methylthiazol-5(2H)-ylidene]ethyl phosphate site.

The protein belongs to the thiamine-phosphate synthase family. Requires Mg(2+) as cofactor.

The catalysed reaction is 2-[(2R,5Z)-2-carboxy-4-methylthiazol-5(2H)-ylidene]ethyl phosphate + 4-amino-2-methyl-5-(diphosphooxymethyl)pyrimidine + 2 H(+) = thiamine phosphate + CO2 + diphosphate. It catalyses the reaction 2-(2-carboxy-4-methylthiazol-5-yl)ethyl phosphate + 4-amino-2-methyl-5-(diphosphooxymethyl)pyrimidine + 2 H(+) = thiamine phosphate + CO2 + diphosphate. The enzyme catalyses 4-methyl-5-(2-phosphooxyethyl)-thiazole + 4-amino-2-methyl-5-(diphosphooxymethyl)pyrimidine + H(+) = thiamine phosphate + diphosphate. The protein operates within cofactor biosynthesis; thiamine diphosphate biosynthesis; thiamine phosphate from 4-amino-2-methyl-5-diphosphomethylpyrimidine and 4-methyl-5-(2-phosphoethyl)-thiazole: step 1/1. Functionally, condenses 4-methyl-5-(beta-hydroxyethyl)thiazole monophosphate (THZ-P) and 2-methyl-4-amino-5-hydroxymethyl pyrimidine pyrophosphate (HMP-PP) to form thiamine monophosphate (TMP). This chain is Thiamine-phosphate synthase, found in Bacillus anthracis (strain A0248).